Consider the following 206-residue polypeptide: Small ribosomal subunit protein uS4 (206 aa).

An S4 RNA-binding domain is found at 94–157 (RRLDNVVYRL…RRRTYFKNLI (64 aa)).

This sequence belongs to the universal ribosomal protein uS4 family. In terms of assembly, part of the 30S ribosomal subunit. Contacts protein S5. The interaction surface between S4 and S5 is involved in control of translational fidelity.

Its function is as follows. One of the primary rRNA binding proteins, it binds directly to 16S rRNA where it nucleates assembly of the body of the 30S subunit. In terms of biological role, with S5 and S12 plays an important role in translational accuracy. The protein is Small ribosomal subunit protein uS4 of Roseiflexus sp. (strain RS-1).